The following is a 443-amino-acid chain: Crinkler effector protein 161 (443 aa).

The N-terminal stretch at methionine 1–glutamine 17 is a signal peptide. Residues valine 18–lysine 56 are LQLFLAK domain. Positions glutamate 57–isoleucine 126 are DWL domain. Residues histidine 127 to proline 133 carry the HVLVXXP motif motif. An effector domain region spans residues glutamate 134 to asparagine 439. 2 short sequence motifs (nuclear localization signal) span residues alanine 161 to histidine 170 and histidine 384 to serine 393.

Belongs to the Crinkler effector family.

The protein resides in the secreted. It localises to the host nucleus. Secreted effector that exhibits strong cell death suppression activity and suppresses cell death induced by a variety of effectors including CRN63, Avh241 and Avr3a. Protects host plants from biotic and abiotic stresses such as salinity and drought by up-regulation of many defense-related genes, including ABC transporters, Cytochrome P450 monooxygenases and receptor-like kinases (RLKs). Also enhances resistance to Phytophtora pathogens. This is Crinkler effector protein 161 from Phytophthora sojae (strain P6497) (Soybean stem and root rot agent).